A 190-amino-acid chain; its full sequence is LOB domain-containing protein 1 (190 aa).

Over residues 1–11 the composition is skewed to polar residues; it reads MESKSDASVAT. A disordered region spans residues 1–27; it reads MESKSDASVATTPIISSSSSPPPSLSP. One can recognise an LOB domain in the interval 32–133; it reads SPCAACKILR…AQLAKAQVEM (102 aa).

Belongs to the LOB domain-containing protein family. As to expression, expressed in young shoots, roots, stems, leaves and flowers.

In Arabidopsis thaliana (Mouse-ear cress), this protein is LOB domain-containing protein 1 (LBD1).